We begin with the raw amino-acid sequence, 148 residues long: L-alanine exporter AlaE (148 aa).

The next 4 helical transmembrane spans lie at 18–38 (FALVVYCFVIGMIIEIVISGM), 49–69 (VSIPVNILIAWPYGLYRDAFI), 88–108 (LLAYVSFQSPVYALILWSVGA), and 115–135 (TAVASNALVSMAMGVAYGYFL).

It belongs to the AlaE exporter family.

Its subcellular location is the cell inner membrane. Functionally, exports L-alanine. This is L-alanine exporter AlaE from Yersinia enterocolitica subsp. palearctica serotype O:3 (strain DSM 13030 / CIP 106945 / Y11).